A 154-amino-acid polypeptide reads, in one-letter code: Transcriptional repressor NrdR (154 aa).

The segment at 3-34 (CPFCSAHDTKVIDSRLVAEGDQVRRRRECQAC) is a zinc-finger region. The region spanning 49 to 139 (PRVIKQDGSR…VYRRFQDLNE (91 aa)) is the ATP-cone domain.

It belongs to the NrdR family. Zn(2+) serves as cofactor.

Its function is as follows. Negatively regulates transcription of bacterial ribonucleotide reductase nrd genes and operons by binding to NrdR-boxes. In Azotobacter vinelandii (strain DJ / ATCC BAA-1303), this protein is Transcriptional repressor NrdR.